A 447-amino-acid polypeptide reads, in one-letter code: N-succinylarginine dihydrolase (447 aa).

Substrate-binding positions include 19-28 (AGLSFGNEAS), Asn-110, and 137-138 (HR). Residue Glu-174 is part of the active site. Arg-214 contacts substrate. Residue His-250 is part of the active site. Residues Asp-252 and Asn-365 each coordinate substrate. Cys-371 (nucleophile) is an active-site residue.

This sequence belongs to the succinylarginine dihydrolase family. Homodimer.

It carries out the reaction N(2)-succinyl-L-arginine + 2 H2O + 2 H(+) = N(2)-succinyl-L-ornithine + 2 NH4(+) + CO2. Its pathway is amino-acid degradation; L-arginine degradation via AST pathway; L-glutamate and succinate from L-arginine: step 2/5. Catalyzes the hydrolysis of N(2)-succinylarginine into N(2)-succinylornithine, ammonia and CO(2). In Acinetobacter baumannii (strain ATCC 17978 / DSM 105126 / CIP 53.77 / LMG 1025 / NCDC KC755 / 5377), this protein is N-succinylarginine dihydrolase.